A 760-amino-acid polypeptide reads, in one-letter code: NAD(P)H-quinone oxidoreductase subunit 5, chloroplastic (760 aa).

16 helical membrane-spanning segments follow: residues 9–29 (WIISFVTLPVPMLIGMGLLLF), 39–59 (IWAFPSVLLLSIVMVFSIDLF), 89–109 (IDPLTSILLILITTVGILVLV), 125–145 (FVYMSFFNTSMLGLVTSSNLI), 147–167 (IYIFWELVGMCSYLLIGFWFT), 185–205 (GDFGLLLGILGLYWITGSFEF), 221–241 (NEVHFLFVTLCAFLLFSGAIA), 260–280 (TPISALIHAATMVAAGIFLVA), 282–302 (LLPLFVVIPYIMKLIALIGII), 329–349 (LGYTMLALGMGSYRAALFHLI), 356–376 (ALLFLGSGSIIHSMEVIVGYS), 398–418 (IAFLLGTLSLCGIPPLACFWS), 429–449 (YSPIFAIIAFSTAGLTAFYMF), 556–576 (ILFPMLVLVLFTLFIGAIGIP), 620–640 (FSVSIASFGIFIASSLYKPIY), and 734–754 (FYLLLYLFYVLIFLLISSSIF).

It belongs to the complex I subunit 5 family. In terms of assembly, NDH is composed of at least 16 different subunits, 5 of which are encoded in the nucleus.

It is found in the plastid. The protein localises to the chloroplast thylakoid membrane. The catalysed reaction is a plastoquinone + NADH + (n+1) H(+)(in) = a plastoquinol + NAD(+) + n H(+)(out). It carries out the reaction a plastoquinone + NADPH + (n+1) H(+)(in) = a plastoquinol + NADP(+) + n H(+)(out). NDH shuttles electrons from NAD(P)H:plastoquinone, via FMN and iron-sulfur (Fe-S) centers, to quinones in the photosynthetic chain and possibly in a chloroplast respiratory chain. The immediate electron acceptor for the enzyme in this species is believed to be plastoquinone. Couples the redox reaction to proton translocation, and thus conserves the redox energy in a proton gradient. The chain is NAD(P)H-quinone oxidoreductase subunit 5, chloroplastic (ndhF) from Populus trichocarpa (Western balsam poplar).